Here is a 546-residue protein sequence, read N- to C-terminus: T-complex protein 1 subunit zeta (546 aa).

Ser-2 carries the post-translational modification N-acetylserine. At Ser-249 the chain carries Phosphoserine.

Belongs to the TCP-1 chaperonin family. Heterooligomeric complex of about 850 to 900 kDa that forms two stacked rings, 12 to 16 nm in diameter.

Its subcellular location is the cytoplasm. In terms of biological role, molecular chaperone; assists the folding of proteins upon ATP hydrolysis. Known to play a role, in vitro, in the folding of actin and tubulin. In yeast may play a role in mitotic spindle formation. The polypeptide is T-complex protein 1 subunit zeta (CCT6) (Saccharomyces cerevisiae (strain ATCC 204508 / S288c) (Baker's yeast)).